The chain runs to 555 residues: MPSISPFAGKPVDPDRLVNIDALLDAYYTRKPDPAIATQRVAFGTSGHRGSSLTTSFNENHILSISQAIADYRKGAGITGPLFIGIDTHALSRPALKSALEVFAANGVEVRIDAQDGYTPTPVISHAILTYNRDRSSDLADGVVITPSHNPPEDGGYKYNPPHGGPADTDITKVVETAANDYMAKKMEGVKRVSFEDALKAPTTKRHDYITPYVDDLAAVVDMDVIRESGVSIGIDPLGGAAVDYWQPIIDKYGINATIVSKEVDPTFRFMTADWDGQIRMDCSSPYAMARLVGMKDKFDIAFANDTDADRHGIVSGKYGLMNPNHYLAVAIEYLFNNRENWNASAGVGKTVVSSSMIDRVAKEIGRKLVEVPVGFKWFVDGLYNGTLGFGGEESAGASFLRRAGTVWSTDKDGIILGLLAAEITARTKRTPGAAYEDMTRRLGTPYYARIDAPADPEQKAILKNLSPEQIGMTELAGEPILSTLTNAPGNGAAIGGLKVSAKDGWFAARPSGTENVYKIYAESFKSAAHLKAIQTEAQDAISALFAKAAQKNAG.

Substrate contacts are provided by residues T45, R49, 148-149 (SH), and K158. The active-site Phosphoserine intermediate is S148. Residue S148 coordinates Mg(2+). Mg(2+) is bound by residues D306, D308, and D310. Substrate is bound by residues 310–311 (DR) and 393–395 (EES).

Belongs to the phosphohexose mutase family. It depends on Mg(2+) as a cofactor.

It carries out the reaction alpha-D-glucose 1-phosphate = alpha-D-glucose 6-phosphate. This enzyme participates in both the breakdown and synthesis of glucose. In Komagataeibacter xylinus (Gluconacetobacter xylinus), this protein is Phosphoglucomutase (celB).